We begin with the raw amino-acid sequence, 679 residues long: Glycine--tRNA ligase beta subunit (679 aa).

The protein belongs to the class-II aminoacyl-tRNA synthetase family. Tetramer of two alpha and two beta subunits.

It is found in the cytoplasm. It catalyses the reaction tRNA(Gly) + glycine + ATP = glycyl-tRNA(Gly) + AMP + diphosphate. The protein is Glycine--tRNA ligase beta subunit of Streptococcus gordonii (strain Challis / ATCC 35105 / BCRC 15272 / CH1 / DL1 / V288).